The sequence spans 315 residues: Trimethylguanosine synthase (315 aa).

A required for correct nucleolar localization region spans residues 1–58 (MGRTFIHASKIKHAARKRKHHSNFRTLIKLLNNDAYKIESSKPLKNGKLFKYWKNRRR). D126 lines the S-adenosyl-L-methionine pocket. Positions 271 to 315 (TENSRRESSEKEELSSENEELSKRKKHESTTTTKDNTVDIYDVNG) are disordered. Residues 273 to 284 (NSRRESSEKEEL) show a composition bias toward basic and acidic residues.

It belongs to the methyltransferase superfamily. Trimethylguanosine synthase family. As to quaternary structure, monomer. Interacts with the spliceosomal snRNP core component SMB1 and the snoRNP components CBF5 and NOP58.

Its subcellular location is the nucleus. It is found in the nucleolus. It carries out the reaction a 5'-end (N(7)-methyl 5'-triphosphoguanosine)-ribonucleoside in snRNA + S-adenosyl-L-methionine = a 5'-end (N(2),N(7)-dimethyl 5'-triphosphoguanosine)-ribonucleoside in snRNA + S-adenosyl-L-homocysteine + H(+). It catalyses the reaction a 5'-end (N(7)-methyl 5'-triphosphoguanosine)-ribonucleoside in snoRNA + S-adenosyl-L-methionine = a 5'-end (N(2),N(7)-dimethyl 5'-triphosphoguanosine)-ribonucleoside in snoRNA + S-adenosyl-L-homocysteine + H(+). The catalysed reaction is a 5'-end (N(2),N(7)-dimethyl 5'-triphosphoguanosine)-ribonucleoside in snRNA + S-adenosyl-L-methionine = a 5'-end (N(2),N(2),N(7)-trimethyl 5'-triphosphoguanosine)-ribonucleoside in snRNA + S-adenosyl-L-homocysteine + H(+). The enzyme catalyses a 5'-end (N(2),N(7)-dimethyl 5'-triphosphoguanosine)-ribonucleoside in snoRNA + S-adenosyl-L-methionine = a 5'-end (N(2),N(2),N(7)-trimethyl 5'-triphosphoguanosine)-ribonucleoside in snoRNA + S-adenosyl-L-homocysteine + H(+). Substrate inhibited by S-adenosyl-L-homocysteine. Functionally, catalyzes the two serial methylation steps for the conversion of the 7-monomethylguanosine (m(7)G) caps of snRNAs and snoRNAs to a 2,2,7-trimethylguanosine (m(2,2,7)G) cap structure. The enzyme is specific for guanine, and N7 methylation must precede N2 methylation. Hypermethylates the m3G cap on TLC1 telomerase which affects telomere silencing and telomere length regulation. Required for pre-mRNA splicing, pre-rRNA processing and small ribosomal subunit synthesis. Involved in nucleolar structural organization. The protein is Trimethylguanosine synthase (TGS1) of Saccharomyces cerevisiae (strain ATCC 204508 / S288c) (Baker's yeast).